Consider the following 216-residue polypeptide: Neural cell adhesion molecule L1.2 (216 aa).

Residues 1–64 (EFFIHYLRKD…QTAGARVMEV (64 aa)) form the Fibronectin type-III domain. At 1 to 73 (EFFIHYLRKD…VKSGFVTESW (73 aa)) the chain is on the extracellular side. 2 N-linked (GlcNAc...) asparagine glycosylation sites follow: Asn-22 and Asn-46. Residues 74 to 94 (FIGLISALVLLLLVLLILCFI) form a helical membrane-spanning segment. Over 95-216 (KRSKGGKYSV…GLPNSAALLD (122 aa)) the chain is Cytoplasmic. Disordered stretches follow at residues 127 to 149 (YRSLESDNEEKRTASQPSLCEDS) and 173 to 216 (DESL…ALLD). Positions 128 to 139 (RSLESDNEEKRT) are enriched in basic and acidic residues.

The protein belongs to the immunoglobulin superfamily. L1/neurofascin/NgCAM family. As to expression, expressed in many postmitotic neurons in 16-36 hours embryos. Little or no expression in the olfactory placode, the anterior lateral line/acoustic ganglia complex, the posterior lateral line ganglion, late-developing hindbrain neurons and some Rohon-Beard cells in the spinal cord.

It localises to the cell membrane. Its subcellular location is the cell projection. The protein resides in the growth cone. Cell adhesion molecule with an important role in the development of the nervous system. Involved in neuron-neuron adhesion, neurite fasciculation, outgrowth of neurites, etc. Binds to axonin on neurons. The polypeptide is Neural cell adhesion molecule L1.2 (nadl1.2) (Danio rerio (Zebrafish)).